We begin with the raw amino-acid sequence, 148 residues long: uncharacterized protein (148 aa).

Disordered stretches follow at residues 1-86 and 122-148; these read MCPP…VQSP and RAHR…TSPC. Residues 38–57 show a composition bias toward basic residues; it reads RPPKMQRRPRPPVAKRRRFP. Over residues 134-148 the composition is skewed to polar residues; the sequence is QSRQRPSPDSQTSPC.

It belongs to the Epstein-Barr virus BLLF2 family.

This is an uncharacterized protein from Homo sapiens (Human).